A 315-amino-acid chain; its full sequence is Olfactory receptor 5A1 (315 aa).

The Extracellular segment spans residues 1 to 28 (MSITKAWNSSSVTMFILLGFTDHPELQA). An N-linked (GlcNAc...) asparagine glycan is attached at N8. A helical transmembrane segment spans residues 29-52 (LLFVTFLGIYLTTLAWNLALIFLI). The Cytoplasmic portion of the chain corresponds to 53–60 (RGDTHLHT). Residues 61-82 (PMYFFLSNLSFIDICYSSAVAP) form a helical membrane-spanning segment. Residues 83 to 103 (NMLTDFFWEQKTISFVGCAAQ) are Extracellular-facing. A disulfide bridge connects residues C100 and C192. Residues 104-123 (FFFFVGMGLSECLLLTAMAY) form a helical membrane-spanning segment. Topologically, residues 124–142 (DRYAAISSPLLYPTIMTQG) are cytoplasmic. Residues 143-161 (LCTRMVVGAYVGGFLSSLI) form a helical membrane-spanning segment. Residues 162–198 (QASSIFRLHFCGPNIINHFFCDLPPVLALSCSDTFLS) are Extracellular-facing. A helical transmembrane segment spans residues 199–222 (QVVNFLVVVTVGGTSFLQLLISYG). Residues 223–239 (YIVSAVLKIPSAEGRWK) lie on the Cytoplasmic side of the membrane. The chain crosses the membrane as a helical span at residues 240–262 (ACNTCASHLMVVTLLFGTALFVY). Topologically, residues 263–275 (LRPSSSYLLGRDK) are extracellular. Residues 276–295 (VVSVFYSLVIPMLNPLIYSL) traverse the membrane as a helical segment. At 296-315 (RNKEIKDALWKVLERKKVFS) the chain is on the cytoplasmic side.

The protein belongs to the G-protein coupled receptor 1 family.

The protein localises to the cell membrane. Its function is as follows. Odorant receptor. The protein is Olfactory receptor 5A1 (OR5A1) of Homo sapiens (Human).